The primary structure comprises 155 residues: Large ribosomal subunit protein uL30 (155 aa).

It belongs to the universal ribosomal protein uL30 family. As to quaternary structure, part of the 50S ribosomal subunit.

The polypeptide is Large ribosomal subunit protein uL30 (Cenarchaeum symbiosum (strain A)).